The primary structure comprises 576 residues: Low-affinity glucose transporter HXT4 (576 aa).

Positions 1–56 are disordered; that stretch reads MSEEAAYQEDTAVQNTPADALSPVESDSNSALSTPSNKAERDDMKDFDENHEESNN. At 1-66 the chain is on the cytoplasmic side; that stretch reads MSEEAAYQED…YVEIPKKPAS (66 aa). Residues 25 to 37 show a composition bias toward polar residues; the sequence is ESDSNSALSTPSN. Residues 38-54 are compositionally biased toward basic and acidic residues; it reads KAERDDMKDFDENHEES. Lysine 45 participates in a covalent cross-link: Glycyl lysine isopeptide (Lys-Gly) (interchain with G-Cter in ubiquitin). Residues 67–87 form a helical membrane-spanning segment; it reads AYVTVSICCLMVAFGGFVFGW. Topologically, residues 88 to 122 are extracellular; the sequence is DTGTISGFVAQTDFIRRFGMKHHDGTYYLSKVRTG. A helical membrane pass occupies residues 123–143; the sequence is LIVSIFNIGCAIGGIILAKLG. The Cytoplasmic segment spans residues 144-149; sequence DMYGRK. Residues 150–170 form a helical membrane-spanning segment; sequence MGLIVVVVIYIIGIIIQIASI. Over 171–180 the chain is Extracellular; the sequence is NKWYQYFIGR. A helical membrane pass occupies residues 181-201; sequence IISGLGVGGIAVLSPMLISEV. Over 202-207 the chain is Cytoplasmic; the sequence is SPKHIR. The helical transmembrane segment at 208–228 threads the bilayer; sequence GTLVSCYQLMITLGIFLGYCT. The Extracellular segment spans residues 229–242; the sequence is NYGTKTYTNSVQWR. Residues 243–263 form a helical membrane-spanning segment; it reads VPLGLGFAWALFMIGGMTFVP. The Cytoplasmic portion of the chain corresponds to 264-346; sequence ESPRYLVEVG…IQSLQQLTGD (83 aa). The chain crosses the membrane as a helical span at residues 347-363; it reads NYFFYYGTTVFTAVGLE. Residues 364-369 lie on the Extracellular side of the membrane; sequence DSFETS. Residues 370–387 form a helical membrane-spanning segment; it reads IVLGIVNFASTFVGIFLV. Residues 388–394 lie on the Cytoplasmic side of the membrane; the sequence is ERYGRRR. A helical transmembrane segment spans residues 395 to 415; it reads CLLWGAASMTACMVVFASVGV. The Extracellular segment spans residues 416-437; the sequence is TRLWPNGKKNGSSKGAGNCMIV. An N-linked (GlcNAc...) asparagine glycan is attached at asparagine 425. Residues 438 to 458 traverse the membrane as a helical segment; sequence FTCFYLFCFATTWAPIPFVVN. The Cytoplasmic portion of the chain corresponds to 459 to 475; sequence SETFPLRVKSKCMAIAQ. The chain crosses the membrane as a helical span at residues 476-496; it reads ACNWIWGFLIGFFTPFISGAI. Aspartate 497 is a topological domain (extracellular). The helical transmembrane segment at 498 to 518 threads the bilayer; sequence FYYGYVFMGCLVFSYFYVFFF. Residues 519 to 576 lie on the Cytoplasmic side of the membrane; sequence VPETKGLTLEEVNTLWEEGVLPWKSPSWVPPNKRGTDYNADDLMHDDQPFYKKMFGKK.

This sequence belongs to the major facilitator superfamily. Sugar transporter (TC 2.A.1.1) family.

The protein resides in the cell membrane. Xylose uptake is strongly inhibited by glucose. Its function is as follows. Low-affinity glucose transporter. Can also transport xylose. The chain is Low-affinity glucose transporter HXT4 (HXT4) from Saccharomyces cerevisiae (strain ATCC 204508 / S288c) (Baker's yeast).